Here is a 90-residue protein sequence, read N- to C-terminus: Electron transfer flavoprotein regulatory factor 1 (90 aa).

The protein belongs to the complex I LYR family. As to quaternary structure, homotetramer. Interacts with NDUFAB1. Interacts with ETFA. Interacts with ETFB.

It localises to the mitochondrion. Acts as a regulator of the electron transfer flavoprotein by promoting the removal of flavin from the ETF holoenzyme (composed of ETFA and ETFB). This Homo sapiens (Human) protein is Electron transfer flavoprotein regulatory factor 1.